A 316-amino-acid polypeptide reads, in one-letter code: 4-hydroxy-3-methylbut-2-enyl diphosphate reductase (316 aa).

Residue Cys12 coordinates [4Fe-4S] cluster. (2E)-4-hydroxy-3-methylbut-2-enyl diphosphate is bound by residues His41 and His74. Residues His41 and His74 each coordinate dimethylallyl diphosphate. Isopentenyl diphosphate-binding residues include His41 and His74. Cys96 contributes to the [4Fe-4S] cluster binding site. His124 is a binding site for (2E)-4-hydroxy-3-methylbut-2-enyl diphosphate. His124 is a binding site for dimethylallyl diphosphate. His124 is an isopentenyl diphosphate binding site. Glu126 functions as the Proton donor in the catalytic mechanism. Thr169 contacts (2E)-4-hydroxy-3-methylbut-2-enyl diphosphate. Cys199 provides a ligand contact to [4Fe-4S] cluster. Ser227, Ser228, Asn229, and Ser271 together coordinate (2E)-4-hydroxy-3-methylbut-2-enyl diphosphate. Dimethylallyl diphosphate contacts are provided by Ser227, Ser228, Asn229, and Ser271. Residues Ser227, Ser228, Asn229, and Ser271 each coordinate isopentenyl diphosphate.

It belongs to the IspH family. [4Fe-4S] cluster serves as cofactor.

The catalysed reaction is isopentenyl diphosphate + 2 oxidized [2Fe-2S]-[ferredoxin] + H2O = (2E)-4-hydroxy-3-methylbut-2-enyl diphosphate + 2 reduced [2Fe-2S]-[ferredoxin] + 2 H(+). It carries out the reaction dimethylallyl diphosphate + 2 oxidized [2Fe-2S]-[ferredoxin] + H2O = (2E)-4-hydroxy-3-methylbut-2-enyl diphosphate + 2 reduced [2Fe-2S]-[ferredoxin] + 2 H(+). It participates in isoprenoid biosynthesis; dimethylallyl diphosphate biosynthesis; dimethylallyl diphosphate from (2E)-4-hydroxy-3-methylbutenyl diphosphate: step 1/1. Its pathway is isoprenoid biosynthesis; isopentenyl diphosphate biosynthesis via DXP pathway; isopentenyl diphosphate from 1-deoxy-D-xylulose 5-phosphate: step 6/6. Functionally, catalyzes the conversion of 1-hydroxy-2-methyl-2-(E)-butenyl 4-diphosphate (HMBPP) into a mixture of isopentenyl diphosphate (IPP) and dimethylallyl diphosphate (DMAPP). Acts in the terminal step of the DOXP/MEP pathway for isoprenoid precursor biosynthesis. In Stenotrophomonas maltophilia (strain K279a), this protein is 4-hydroxy-3-methylbut-2-enyl diphosphate reductase.